Reading from the N-terminus, the 229-residue chain is Large ribosomal subunit protein uL1 (229 aa).

It belongs to the universal ribosomal protein uL1 family. Part of the 50S ribosomal subunit.

Its function is as follows. Binds directly to 23S rRNA. The L1 stalk is quite mobile in the ribosome, and is involved in E site tRNA release. Protein L1 is also a translational repressor protein, it controls the translation of the L11 operon by binding to its mRNA. The sequence is that of Large ribosomal subunit protein uL1 from Clostridium botulinum (strain Alaska E43 / Type E3).